The sequence spans 227 residues: Cytidylate kinase (227 aa).

12 to 20 (GPSGAGKGT) provides a ligand contact to ATP.

This sequence belongs to the cytidylate kinase family. Type 1 subfamily.

It localises to the cytoplasm. The enzyme catalyses CMP + ATP = CDP + ADP. It catalyses the reaction dCMP + ATP = dCDP + ADP. This is Cytidylate kinase from Shigella flexneri.